The following is a 478-amino-acid chain: Hepatitis A virus cellular receptor 1 (478 aa).

An N-terminal signal peptide occupies residues 1–24; sequence MADPIMHLQVVILSLILHLADSVA. In terms of domain architecture, Ig-like V-type spans 25 to 126; the sequence is DSVNVDGVAG…WFNDMKITIS (102 aa). The Extracellular portion of the chain corresponds to 25–397; the sequence is DSVNVDGVAG…SPQMVNTTEG (373 aa). 3 cysteine pairs are disulfide-bonded: C41–C110, C51–C62, and C57–C109. N-linked (GlcNAc...) asparagine glycosylation is found at N70 and N87. A run of 28 repeats spans residues 148–155, 156–161, 162–167, 168–173, 174–179, 180–185, 186–191, 192–197, 198–201, 202–207, 208–211, 212–217, 218–221, 222–227, 228–233, 234–239, 240–245, 246–251, 252–257, 258–263, 264–268, 269–273, 274–279, 280–285, 286–291, 292–297, 298–303, and 304–309. The tract at residues 148–309 is 28 X 6 AA approximate tandem repeats of L-P-[MT]-T-[MT]-T; that stretch reads VPTTTTTTLP…TTTTLPTTTM (162 aa). The segment at 187 to 303 is disordered; the sequence is PTTTTVPMTT…TTTTLPTTTT (117 aa). 2 disordered regions span residues 320–339 and 344–370; these read PMQD…PAET and LLGA…TVTE. Positions 348 to 370 are enriched in polar residues; that stretch reads TRTQPTSSPLYSYTTDGSDTVTE. Residues N379 and N393 are each glycosylated (N-linked (GlcNAc...) asparagine). The chain crosses the membrane as a helical span at residues 398 to 418; that stretch reads IYAGVCISVLVLLAVLGVVIA. Residues 419–478 are Cytoplasmic-facing; sequence KKYFFKKEIQQLSVSFSNHQFKTLQNAVKKEVHAEDNIYIENNLYAMNQDPVVLFESLRP.

Belongs to the immunoglobulin superfamily. TIM family. Interacts with STAM. Interacts with SELPLG.

The protein resides in the cell membrane. Its function is as follows. Phosphatidylserine receptor that plays an important functional role in regulatory B-cells homeostasis including generation, expansion and suppressor functions. As P-selectin/SELPLG ligand, plays a specialized role in activated but not naive T-cell trafficking during inflammatory responses. Controls thereby T-cell accumulation in the inflamed central nervous system (CNS) and the induction of autoimmune disease. Also regulates expression of various anti-inflammatory cytokines and co-inhibitory ligands including IL10. Acts as a regulator of T-cell proliferation. May play a role in kidney injury and repair. The protein is Hepatitis A virus cellular receptor 1 (HAVCR1) of Chlorocebus aethiops (Green monkey).